The following is a 701-amino-acid chain: MSRKTPIERYRNIGISAHIDAGKTTTTERILFYTGVNHKLGEVHDGAATMDWMEQEQERGITITSAATTAFWKGMAGNYPEHRINIIDTPGHVDFTIEVERSMRVLDGACMVYDAVGGVQPQSETVWRQANKYNVPRIAFVNKMDRVGADFFRVQTQIADRLKGRAVPIQIPVGAEDHFQGVVDLVKMKAVVWDDASQGVRFEYVDIPAELLPVAQEWRDKMIEAAAEADEALLEQYLAGEPLTETQIKQGLRKRTIANEIVPMLCGSAFKNKGVQSMLDAVIDYLPSPADVPAILGHTEDDREAERHPSDDEPFSALAFKIMTDPFVGQLIFFRVYSGVVNSGDTVYNPVKGKRERLGRILQMHANVRQEIKEVRAGDIAAAVGLKEATTGDTLCDPGKVIILERMSFPEPVISQAVEPKTKADQEKMGIALNRLAQEDPSFRVTTDEESGQTIISGMGELHLEILVDRMRREFGVEASVGKPQVAYRETIRQGVKDVEGKFIKQSGGRGQYGHVVLNLEPMPHGGGYEFVDAIKGGVVPREFIPAVDKGIRETLTAGVLAGYPVVDVKATLVFGSYHDVDSNENAFRMAGSMAFKEGMKRARPILLEPMMSVEVETPEEFTGNVMGDLSSRRGMVHGMEEIAGGGGKVVRAEVPLATMFGYSTSLRSLTQGRATFTMEFKHYAEAPANVAEAVINAKKA.

Residues 8–290 enclose the tr-type G domain; sequence ERYRNIGISA…AVIDYLPSPA (283 aa). Residues 17–24, 88–92, and 142–145 contribute to the GTP site; these read AHIDAGKT, DTPGH, and NKMD.

Belongs to the TRAFAC class translation factor GTPase superfamily. Classic translation factor GTPase family. EF-G/EF-2 subfamily.

Its subcellular location is the cytoplasm. In terms of biological role, catalyzes the GTP-dependent ribosomal translocation step during translation elongation. During this step, the ribosome changes from the pre-translocational (PRE) to the post-translocational (POST) state as the newly formed A-site-bound peptidyl-tRNA and P-site-bound deacylated tRNA move to the P and E sites, respectively. Catalyzes the coordinated movement of the two tRNA molecules, the mRNA and conformational changes in the ribosome. This chain is Elongation factor G 2, found in Cupriavidus pinatubonensis (strain JMP 134 / LMG 1197) (Cupriavidus necator (strain JMP 134)).